A 139-amino-acid polypeptide reads, in one-letter code: Iron-sulfur cluster assembly 1 homolog, mitochondrial (139 aa).

3 residues coordinate Fe cation: Cys-52, Cys-117, and Cys-119.

It belongs to the HesB/IscA family.

Its subcellular location is the mitochondrion. Functionally, involved in the assembly of mitochondrial iron-sulfur proteins. Probably involved in the binding of an intermediate of Fe/S cluster assembly. In Dictyostelium discoideum (Social amoeba), this protein is Iron-sulfur cluster assembly 1 homolog, mitochondrial (isca1).